Consider the following 692-residue polypeptide: MKRETPLDRYRNIGIMAHIDAGKTTTTERILCYTGKSHKIGEVHDGAATMDWMEQEQERGITITSAATTAFWRENRVNIIDTPGHVDFTIEVERSLRVLDGAIAVFDSVAGVEPQSETVWRQADKYKVPRMCFVNKMDRIGADFYRCVDMIIDRLGAVPLVINLPIGSESDYAGVIDLIKMKAVIWHSEDLGAHFDYVDIPAEYAEKAAEYREKLLETAVEMDDAAMEAYLEGVEPDEETLKKCIRKGTIAMKFVPVLNGSSFKNKGVQPMLDAVVDFLPSPLDVPAIHGLIPETHEDVIRGCSDDEPFSALAFKIMNDPFVGSLTFARVYSGTVESGSYVQNTVKDKRERIGRMLLMHANNREEIKWAGAGDIVAIVGLKDTTTGDTLSDTIKPVILERMEFPEPVIEVAVEPKTKADVEKMGMALARLAAEDPSFRVASDSESGQTVIKGMGELHLEILVDRMKREFKVECSVGAPQVAYRETISKVFTVDYVHKKQSGGSGQFAKVSITFSPLPPGSGYQFESKIVGGSVPKEYIPGVEKGLKSAIDTGVIAGFPVTDMKASLIDGGYHDVDSSVLAFEIAARAAFREGLPKAGPKLLEPIMKVEVVTPEDYMGDVIGDLNSRRGNILGMDQRGNARVIGAMVPLANMFGYVNTLRSMSQGRAQYTMHFDHYSEVPNNVSEEIRAKMAG.

Positions 8–283 (DRYRNIGIMA…AVVDFLPSPL (276 aa)) constitute a tr-type G domain. Residues 17–24 (AHIDAGKT), 81–85 (DTPGH), and 135–138 (NKMD) contribute to the GTP site.

This sequence belongs to the TRAFAC class translation factor GTPase superfamily. Classic translation factor GTPase family. EF-G/EF-2 subfamily.

Its subcellular location is the cytoplasm. Catalyzes the GTP-dependent ribosomal translocation step during translation elongation. During this step, the ribosome changes from the pre-translocational (PRE) to the post-translocational (POST) state as the newly formed A-site-bound peptidyl-tRNA and P-site-bound deacylated tRNA move to the P and E sites, respectively. Catalyzes the coordinated movement of the two tRNA molecules, the mRNA and conformational changes in the ribosome. The sequence is that of Elongation factor G from Rhodospirillum rubrum (strain ATCC 11170 / ATH 1.1.1 / DSM 467 / LMG 4362 / NCIMB 8255 / S1).